The chain runs to 167 residues: Putative 4-hydroxy-4-methyl-2-oxoglutarate aldolase (167 aa).

Substrate contacts are provided by residues 81-84 and Arg-103; that span reads GDII. A divalent metal cation is bound at residue Asp-104.

It belongs to the class II aldolase/RraA-like family. In terms of assembly, homotrimer. The cofactor is a divalent metal cation.

It catalyses the reaction 4-hydroxy-4-methyl-2-oxoglutarate = 2 pyruvate. The enzyme catalyses oxaloacetate + H(+) = pyruvate + CO2. Functionally, catalyzes the aldol cleavage of 4-hydroxy-4-methyl-2-oxoglutarate (HMG) into 2 molecules of pyruvate. Also contains a secondary oxaloacetate (OAA) decarboxylase activity due to the common pyruvate enolate transition state formed following C-C bond cleavage in the retro-aldol and decarboxylation reactions. The sequence is that of Putative 4-hydroxy-4-methyl-2-oxoglutarate aldolase from Corynebacterium jeikeium (strain K411).